A 445-amino-acid chain; its full sequence is Phosphoglucosamine mutase (445 aa).

The Phosphoserine intermediate role is filled by Ser-102. Residues Ser-102, Asp-241, Asp-243, and Asp-245 each contribute to the Mg(2+) site. Ser-102 is subject to Phosphoserine.

It belongs to the phosphohexose mutase family. Mg(2+) is required as a cofactor. Activated by phosphorylation.

It carries out the reaction alpha-D-glucosamine 1-phosphate = D-glucosamine 6-phosphate. Functionally, catalyzes the conversion of glucosamine-6-phosphate to glucosamine-1-phosphate. In Proteus mirabilis (strain HI4320), this protein is Phosphoglucosamine mutase.